Reading from the N-terminus, the 98-residue chain is Cell cycle protein GpsB (98 aa).

The stretch at 34-72 (LDMVIKDYEAFHQEIEELQQENLQLKKQLEEANKRQPAQ) forms a coiled coil.

Belongs to the GpsB family. As to quaternary structure, forms polymers through the coiled coil domains. Interacts with PBP1, MreC and EzrA.

It localises to the cytoplasm. Divisome component that associates with the complex late in its assembly, after the Z-ring is formed, and is dependent on DivIC and PBP2B for its recruitment to the divisome. Together with EzrA, is a key component of the system that regulates PBP1 localization during cell cycle progression. Its main role could be the removal of PBP1 from the cell pole after pole maturation is completed. Also contributes to the recruitment of PBP1 to the division complex. Not essential for septum formation. The chain is Cell cycle protein GpsB from Bacillus licheniformis (strain ATCC 14580 / DSM 13 / JCM 2505 / CCUG 7422 / NBRC 12200 / NCIMB 9375 / NCTC 10341 / NRRL NRS-1264 / Gibson 46).